A 248-amino-acid polypeptide reads, in one-letter code: Tyrosine recombinase XerD-like (248 aa).

In terms of domain architecture, Core-binding (CB) spans 1–72 (MKSYIEPFIA…TANQFLYYLY (72 aa)). Residues 85–248 (DTMKVMRTEK…PVTLEKYYKS (164 aa)) form the Tyr recombinase domain. Catalysis depends on residues Lys-149 and Arg-213. Tyr-245 serves as the catalytic O-(3'-phospho-DNA)-tyrosine intermediate.

It belongs to the 'phage' integrase family. XerD-like subfamily.

The protein localises to the cytoplasm. In terms of biological role, putative tyrosine recombinase. Not involved in the cutting and rejoining of the recombining DNA molecules on dif(SL) site. This Streptococcus pyogenes serotype M4 (strain MGAS10750) protein is Tyrosine recombinase XerD-like.